Here is a 218-residue protein sequence, read N- to C-terminus: Protein P9 (218 aa).

The protein resides in the virion membrane. This Pseudoalteromonas espejiana (Bacteriophage PM2) protein is Protein P9 (IX).